The following is a 251-amino-acid chain: Ubiquinone/menaquinone biosynthesis C-methyltransferase UbiE (251 aa).

Residues Thr-74, Asp-95, 123–124, and Ser-140 contribute to the S-adenosyl-L-methionine site; that span reads NA.

It belongs to the class I-like SAM-binding methyltransferase superfamily. MenG/UbiE family.

It carries out the reaction a 2-demethylmenaquinol + S-adenosyl-L-methionine = a menaquinol + S-adenosyl-L-homocysteine + H(+). The enzyme catalyses a 2-methoxy-6-(all-trans-polyprenyl)benzene-1,4-diol + S-adenosyl-L-methionine = a 5-methoxy-2-methyl-3-(all-trans-polyprenyl)benzene-1,4-diol + S-adenosyl-L-homocysteine + H(+). Its pathway is quinol/quinone metabolism; menaquinone biosynthesis; menaquinol from 1,4-dihydroxy-2-naphthoate: step 2/2. It participates in cofactor biosynthesis; ubiquinone biosynthesis. Methyltransferase required for the conversion of demethylmenaquinol (DMKH2) to menaquinol (MKH2) and the conversion of 2-polyprenyl-6-methoxy-1,4-benzoquinol (DDMQH2) to 2-polyprenyl-3-methyl-6-methoxy-1,4-benzoquinol (DMQH2). The chain is Ubiquinone/menaquinone biosynthesis C-methyltransferase UbiE from Serratia proteamaculans (strain 568).